The following is a 594-amino-acid chain: Glutamate decarboxylase 1 (594 aa).

The span at 1–13 (MASSTPSSSATSS) shows a compositional bias: low complexity. Residues 1–23 (MASSTPSSSATSSNAGADPNTTN) are disordered. The residue at position 78 (serine 78) is a Phosphoserine. 190-192 (QLS) contributes to the 4-aminobutanoate binding site. Lysine 405 is modified (N6-(pyridoxal phosphate)lysine). Residue arginine 567 coordinates 4-aminobutanoate.

This sequence belongs to the group II decarboxylase family. As to quaternary structure, homodimer. Requires pyridoxal 5'-phosphate as cofactor.

It catalyses the reaction L-glutamate + H(+) = 4-aminobutanoate + CO2. In terms of biological role, catalyzes the synthesis of the inhibitory neurotransmitter gamma-aminobutyric acid (GABA) with pyridoxal 5'-phosphate as cofactor. This Pongo abelii (Sumatran orangutan) protein is Glutamate decarboxylase 1 (GAD1).